The sequence spans 452 residues: Down-regulator of invasive growth 1 (452 aa).

2 disordered regions span residues 1–145 and 262–311; these read MAVS…SAPA and RNKR…ADLR. 2 stretches are compositionally biased toward polar residues: residues 12–22 and 35–53; these read EDTSIAKSTQD and KGSS…SVGQ. Ser45 is modified (phosphoserine). The segment covering 61 to 77 has biased composition (acidic residues); it reads PEEDDSGDKEADHEDSE. The span at 81 to 100 shows a compositional bias: basic residues; that stretch reads AKKRKAQPLKNPKKSLKRGR. Composition is skewed to polar residues over residues 107–116, 124–145, 269–281, and 291–307; these read LSDSNTNTHG, LASS…SAPA, SYDS…ASTG, and RNSS…TQQR. 4 positions are modified to phosphoserine: Ser126, Ser142, Ser272, and Ser275. Positions 212-452 are interaction with FUS3 and KSS1; that stretch reads IPPPHMLNKP…KSSSHHRTGK (241 aa). Ser330 carries the post-translational modification Phosphoserine. Residues 331 to 348 show a composition bias toward low complexity; that stretch reads ANTKARSASTSTSTSTST. Residues 331–395 form a disordered region; that stretch reads ANTKARSAST…QRTSQPQQQS (65 aa). Over residues 349–361 the composition is skewed to basic and acidic residues; sequence NRDRSSWHEAEPN. Residues 362–372 show a composition bias toward acidic residues; sequence KDEEEGTDLAI. Over residues 378 to 395 the composition is skewed to low complexity; the sequence is PTPTFTTFQRTSQPQQQS. A Phosphothreonine modification is found at Thr379. Phosphoserine occurs at positions 395 and 428.

As to quaternary structure, forms a complex with DIG2, STE12 and either FUS3 or KSS1. The interaction of FUS3 with STE12 depends on the presence of both DIG1 and DIG2. STE12 is lost from FUS3/DIG1/DIG2 complex after pheromone treatment. DIG1 and DIG2 have also been reported to interact with CLN1 and CLN2. Phosphorylated by FUS3 and KSS1, in a pheromone-stimulated manner. Phosphorylation reduces the affinity for STE12.

It is found in the nucleus. Its function is as follows. DIG1 and DIG2 are negative regulators of the filamentation and pheromone induced mating program. DIG1 and DIG2 inhibit the transcriptional activity of STE12 by direct protein-protein interaction. DIG1 colocalizes to promoters with STE12 and redistributes with it during induction of filamentation (by butanol) or mating (by pheromone) to program specific genes, but binding of DIG1 to STE12 is reduced by pheromone treatment. This Saccharomyces cerevisiae (strain ATCC 204508 / S288c) (Baker's yeast) protein is Down-regulator of invasive growth 1 (DIG1).